The following is a 218-amino-acid chain: UPF0329 protein ECU10_1860 (218 aa).

The protein belongs to the UPF0329 family.

The sequence is that of UPF0329 protein ECU10_1860 from Encephalitozoon cuniculi (strain GB-M1) (Microsporidian parasite).